A 368-amino-acid polypeptide reads, in one-letter code: DNA replication and repair protein RecF (368 aa).

Residue 30-37 participates in ATP binding; the sequence is GRNGSGKT.

This sequence belongs to the RecF family.

It is found in the cytoplasm. In terms of biological role, the RecF protein is involved in DNA metabolism; it is required for DNA replication and normal SOS inducibility. RecF binds preferentially to single-stranded, linear DNA. It also seems to bind ATP. The protein is DNA replication and repair protein RecF of Chlorobaculum parvum (strain DSM 263 / NCIMB 8327) (Chlorobium vibrioforme subsp. thiosulfatophilum).